Consider the following 245-residue polypeptide: tRNA pseudouridine synthase A (245 aa).

The active-site Nucleophile is D52. Position 111 (Y111) interacts with substrate.

Belongs to the tRNA pseudouridine synthase TruA family. Homodimer.

It catalyses the reaction uridine(38/39/40) in tRNA = pseudouridine(38/39/40) in tRNA. In terms of biological role, formation of pseudouridine at positions 38, 39 and 40 in the anticodon stem and loop of transfer RNAs. The protein is tRNA pseudouridine synthase A of Wolbachia pipientis subsp. Culex pipiens (strain wPip).